A 325-amino-acid chain; its full sequence is uncharacterized protein (325 aa).

A disordered region spans residues 1-75; that stretch reads MSQPPEHPGN…PPPGYPTHLQ (75 aa). Pro residues predominate over residues 24 to 70; that stretch reads YPPPGYGAPPPPPGYGPPPGTYLPPGYNAPPPPPGYGPPPGPPPPGY. The next 4 membrane-spanning stretches (helical) occupy residues 96-116, 153-173, 205-225, and 273-293; these read AVTL…VIGA, IVMF…HAGI, LLIV…GLIF, and LVGE…AALI.

It to M.tuberculosis Rv2560.

Its subcellular location is the cell membrane. This is an uncharacterized protein from Mycobacterium bovis (strain ATCC BAA-935 / AF2122/97).